Reading from the N-terminus, the 343-residue chain is MLRKVVLLRLCPLLGRPAVSASSGSRREVASGVPPSGSTSPRALNIFDRELKRKQKNWAARQPDPMKFDYLKEEVGSRIADRVYDIARDFPLALDIGCGRGYIAQHLDKETVGKIFQTDIAEHALKNSLETDIPTVNILADEEFLPFQENTFDLVVSSLSLHWVNDLPRALEQIHYVLKPDGVFVGAMFGGDTLYELRCSLQLAETEREGGFSPHISPFTAVNDLGHLLGRAGFNTLTVDTDEIQVNYPGMFELMEDLKGMGESNCSWNRKALLHRDTMLAAAAVYREMYRNEDGSIPATFQIYHMIGWKYHDSQARPAERGSATVSFGELAKLNDVMSHEKK.

Residues Met-1–Val-29 constitute a mitochondrion transit peptide.

Belongs to the methyltransferase superfamily. Interacts with NDUFAF8, leading to stabilize NDUFAF5. Interacts with NDUFS7. Interacts with PYURF (via TRM112 domain); the interaction is direct and stabilizes NDUFAF5 protein.

The protein localises to the mitochondrion inner membrane. In terms of biological role, arginine hydroxylase that mediates hydroxylation of 'Arg-122' of NDUFS7 and is involved in the assembly of mitochondrial NADH:ubiquinone oxidoreductase complex (complex I, MT-ND1) at early stages. May also have methyltransferase activity. The polypeptide is Arginine-hydroxylase NDUFAF5, mitochondrial (Mus musculus (Mouse)).